The primary structure comprises 402 residues: Acyl-[acyl-carrier-protein] desaturase 3, chloroplastic (402 aa).

A chloroplast-targeting transit peptide spans 1–32; sequence MSLTGCLPPRPPCSMRRRTSGGGASVSPVVAM. The interval 1–66 is disordered; that stretch reads MSLTGCLPPR…EVPPQVTHTL (66 aa). Glu139, Glu178, His181, Glu231, Glu264, and His267 together coordinate Fe cation.

Belongs to the fatty acid desaturase type 2 family. As to quaternary structure, homodimer. Fe(2+) serves as cofactor.

It localises to the plastid. The protein resides in the chloroplast. Its pathway is lipid metabolism; fatty acid metabolism. Its function is as follows. Introduces a cis double bond in the acyl chain of an acyl-[acyl-carrier protein]. The polypeptide is Acyl-[acyl-carrier-protein] desaturase 3, chloroplastic (Oryza sativa subsp. japonica (Rice)).